We begin with the raw amino-acid sequence, 303 residues long: Exosome complex component RRP4 homolog (303 aa).

A KH domain is found at 175–213 (GILIKVPPHLIKKSKKHFHTLPYGMAVIIGCNGSVWVTP).

The protein belongs to the RRP4 family. As to quaternary structure, component of the RNA exosome complex. In terms of tissue distribution, ubiquitously expressed.

It localises to the nucleus. The protein localises to the nucleolus. Its subcellular location is the nucleoplasm. Its function is as follows. Non-catalytic component of the RNA exosome complex which has 3'-&gt;5' exoribonuclease activity and participates in a multitude of cellular RNA processing and degradation events. Involved in regulation of antisense ribosomal siRNA production. Involved in response to cold-warm shock. This is Exosome complex component RRP4 homolog from Caenorhabditis elegans.